A 119-amino-acid chain; its full sequence is NADH dehydrogenase [ubiquinone] 1 subunit C2 (119 aa).

Residues 56–75 (GLHRQLLYITAFFFAGYYLV) form a helical membrane-spanning segment.

It belongs to the complex I NDUFC2 subunit family. Complex I is composed of 45 different subunits. Interacts with TMEM242.

Its subcellular location is the mitochondrion inner membrane. In terms of biological role, accessory subunit of the mitochondrial membrane respiratory chain NADH dehydrogenase (Complex I), that is believed not to be involved in catalysis but required for the complex assembly. Complex I functions in the transfer of electrons from NADH to the respiratory chain. The immediate electron acceptor for the enzyme is believed to be ubiquinone. The chain is NADH dehydrogenase [ubiquinone] 1 subunit C2 from Pan troglodytes (Chimpanzee).